The chain runs to 507 residues: Cytochrome P450 monooxygenase tpeC (507 aa).

The helical transmembrane segment at 24-44 (TLAIALIVGFVILKAIYNVFF) threads the bilayer. Cys-449 lines the heme pocket.

Belongs to the cytochrome P450 family. Heme is required as a cofactor.

Its subcellular location is the membrane. The protein operates within secondary metabolite biosynthesis. Functionally, cytochrome P450 monooxygenase; part of the gene cluster that mediates the biosynthesis of polyesters containing 2,4-dihydroxy-6-(2-hydroxypropyl)benzoate and 3-hydroxybutyrate moieties, such as talapolyester G, 15G256beta and 15G256beta-2; as well as to oxidized derivatives such as 15G256alpha. The biosynthesis of the polyesters probably starts with the formation of the diketide 3-hydroxybutyryl-S-ACP catalyzed by the partially reducing polyketide synthase tpeA. The acceptance of 3-hydroxybutyryl by the non-reducing polyketide synthase tpeB would initiate further elongation and cyclization, catalyzed by KS and PT, respectively, to form 2,4-dihydroxy-6-(2-hydroxyn-propyl)benzoyl-S-ACP intermediate. The TE domain could catalyze lactonization at this step to yield 6-hydroxymellein as a derailment product. The polyesterification process maybe occurs when additional molecules of 3-hydroxybutyryl are transferred to tpeB. Following the first esterification step, an intramolecular cyclization catalyzed by the TE domain of tpeB would give talarodioxadione 1, whereas the ethyl esterification of talapolyester G perhaps happens spontaneously. Further oxidation by the cytochrome P450 monooxygenase tpeC then leads to the formation of oxidized derivatives. This is Cytochrome P450 monooxygenase tpeC from Talaromyces stipitatus (strain ATCC 10500 / CBS 375.48 / QM 6759 / NRRL 1006) (Penicillium stipitatum).